The sequence spans 350 residues: 8-amino-7-oxononanoate synthase (350 aa).

Position 77–78 (77–78 (GY)) interacts with pyridoxal 5'-phosphate. H102 lines the substrate pocket. Pyridoxal 5'-phosphate contacts are provided by residues S150, 175-178 (DDAH), and 204-207 (TLSK). K207 is subject to N6-(pyridoxal phosphate)lysine. T316 provides a ligand contact to substrate.

Belongs to the class-II pyridoxal-phosphate-dependent aminotransferase family. BioF subfamily. Homodimer. It depends on pyridoxal 5'-phosphate as a cofactor.

It catalyses the reaction 6-carboxyhexanoyl-[ACP] + L-alanine + H(+) = (8S)-8-amino-7-oxononanoate + holo-[ACP] + CO2. Its pathway is cofactor biosynthesis; biotin biosynthesis. Functionally, catalyzes the decarboxylative condensation of pimeloyl-[acyl-carrier protein] and L-alanine to produce 8-amino-7-oxononanoate (AON), [acyl-carrier protein], and carbon dioxide. The chain is 8-amino-7-oxononanoate synthase from Methylocella silvestris (strain DSM 15510 / CIP 108128 / LMG 27833 / NCIMB 13906 / BL2).